We begin with the raw amino-acid sequence, 1036 residues long: Protein CLEC16A (1036 aa).

The FPL domain occupies 51-198 (IRSITEILIW…AVRTITLNVY (148 aa)). 4 disordered regions span residues 375 to 416 (SLEM…DAEK), 437 to 458 (GTSV…NSEN), 876 to 967 (HSSP…PSLL), and 1008 to 1036 (SQLP…PTEH). The span at 381 to 392 (HKGKKRMQKRPN) shows a compositional bias: basic residues. Low complexity-rich tracts occupy residues 877-891 (SSPS…FASG), 898-923 (STSH…APTT), and 943-954 (NSKPSKNSSARS).

It belongs to the CLEC16A/gop-1 family. Interacts with RNF41/NRDP1. In terms of tissue distribution, ubiquitously expressed. Expressed in pancreatic islets.

It is found in the endosome membrane. Its subcellular location is the lysosome membrane. Functionally, regulator of mitophagy through the upstream regulation of the RNF41/NRDP1-PRKN pathway. Mitophagy is a selective form of autophagy necessary for mitochondrial quality control. The RNF41/NRDP1-PRKN pathway regulates autophagosome-lysosome fusion during late mitophagy. May protect RNF41/NRDP1 from proteasomal degradation, RNF41/NRDP1 which regulates proteasomal degradation of PRKN. Plays a key role in beta cells functions by regulating mitophagy/autophagy and mitochondrial health. The chain is Protein CLEC16A from Mus musculus (Mouse).